The sequence spans 414 residues: Multifunctional CCA protein (414 aa).

ATP is bound by residues Gly8 and Arg11. Residues Gly8 and Arg11 each coordinate CTP. Residues Asp21 and Asp23 each contribute to the Mg(2+) site. ATP contacts are provided by Arg91, Arg137, and Arg140. CTP-binding residues include Arg91, Arg137, and Arg140. Residues 228–329 enclose the HD domain; that stretch reads TGIHTLLTLA…LKLLDTIDVW (102 aa).

It belongs to the tRNA nucleotidyltransferase/poly(A) polymerase family. Bacterial CCA-adding enzyme type 1 subfamily. In terms of assembly, monomer. Can also form homodimers and oligomers. Mg(2+) is required as a cofactor. The cofactor is Ni(2+).

It carries out the reaction a tRNA precursor + 2 CTP + ATP = a tRNA with a 3' CCA end + 3 diphosphate. The enzyme catalyses a tRNA with a 3' CCA end + 2 CTP + ATP = a tRNA with a 3' CCACCA end + 3 diphosphate. Catalyzes the addition and repair of the essential 3'-terminal CCA sequence in tRNAs without using a nucleic acid template. Adds these three nucleotides in the order of C, C, and A to the tRNA nucleotide-73, using CTP and ATP as substrates and producing inorganic pyrophosphate. tRNA 3'-terminal CCA addition is required both for tRNA processing and repair. Also involved in tRNA surveillance by mediating tandem CCA addition to generate a CCACCA at the 3' terminus of unstable tRNAs. While stable tRNAs receive only 3'-terminal CCA, unstable tRNAs are marked with CCACCA and rapidly degraded. In Edwardsiella ictaluri (strain 93-146), this protein is Multifunctional CCA protein.